A 258-amino-acid polypeptide reads, in one-letter code: MSESRTSADGGMETSYGFREVPGGEKQGLVNQVFHKVAKRYDIMNDVMSMGMHRVWKDAMIAALNPRKEPGYKVLDVAGGTGDIAFRIVEASGRQAHATVLDINGSMLGVGAERAEKKKLSANLTFVEANAEELPFEAASFDAYTIAFGIRNVPRIDVALAEAYRVLKRGGRLLVLEFSEVDMPLLDKIYDAWSFNAIPQFGKAITGDAEPYQYLVESIRKFPNQENFAAMIRQAGFSRVSHTNYTGGIAALHSGWKL.

The tract at residues 1-20 (MSESRTSADGGMETSYGFRE) is disordered. Residues threonine 81, aspartate 102, and 130–131 (NA) each bind S-adenosyl-L-methionine.

Belongs to the class I-like SAM-binding methyltransferase superfamily. MenG/UbiE family.

It carries out the reaction a 2-demethylmenaquinol + S-adenosyl-L-methionine = a menaquinol + S-adenosyl-L-homocysteine + H(+). The enzyme catalyses a 2-methoxy-6-(all-trans-polyprenyl)benzene-1,4-diol + S-adenosyl-L-methionine = a 5-methoxy-2-methyl-3-(all-trans-polyprenyl)benzene-1,4-diol + S-adenosyl-L-homocysteine + H(+). The protein operates within quinol/quinone metabolism; menaquinone biosynthesis; menaquinol from 1,4-dihydroxy-2-naphthoate: step 2/2. It functions in the pathway cofactor biosynthesis; ubiquinone biosynthesis. In terms of biological role, methyltransferase required for the conversion of demethylmenaquinol (DMKH2) to menaquinol (MKH2) and the conversion of 2-polyprenyl-6-methoxy-1,4-benzoquinol (DDMQH2) to 2-polyprenyl-3-methyl-6-methoxy-1,4-benzoquinol (DMQH2). The polypeptide is Ubiquinone/menaquinone biosynthesis C-methyltransferase UbiE (Rhizobium etli (strain CIAT 652)).